The primary structure comprises 360 residues: Phosphoserine aminotransferase (360 aa).

Arg-42 contacts L-glutamate. Pyridoxal 5'-phosphate contacts are provided by Trp-102, Thr-152, Asp-171, and Gln-194. Lys-195 bears the N6-(pyridoxal phosphate)lysine mark. Asn-237–Thr-238 contributes to the pyridoxal 5'-phosphate binding site.

The protein belongs to the class-V pyridoxal-phosphate-dependent aminotransferase family. SerC subfamily. As to quaternary structure, homodimer. The cofactor is pyridoxal 5'-phosphate.

The protein localises to the cytoplasm. It carries out the reaction O-phospho-L-serine + 2-oxoglutarate = 3-phosphooxypyruvate + L-glutamate. The enzyme catalyses 4-(phosphooxy)-L-threonine + 2-oxoglutarate = (R)-3-hydroxy-2-oxo-4-phosphooxybutanoate + L-glutamate. It participates in amino-acid biosynthesis; L-serine biosynthesis; L-serine from 3-phospho-D-glycerate: step 2/3. Its pathway is cofactor biosynthesis; pyridoxine 5'-phosphate biosynthesis; pyridoxine 5'-phosphate from D-erythrose 4-phosphate: step 3/5. In terms of biological role, catalyzes the reversible conversion of 3-phosphohydroxypyruvate to phosphoserine and of 3-hydroxy-2-oxo-4-phosphonooxybutanoate to phosphohydroxythreonine. This is Phosphoserine aminotransferase from Coxiella burnetii (strain CbuK_Q154) (Coxiella burnetii (strain Q154)).